The chain runs to 412 residues: Phosphoglycerate kinase (412 aa).

Substrate-binding positions include 22 to 24 (DFN), Arg37, 60 to 63 (HLGK), Arg120, and Arg172. Residues Lys223, Gly310, Glu341, and 368–371 (GGDS) each bind ATP.

The protein belongs to the phosphoglycerate kinase family. In terms of assembly, monomer.

Its subcellular location is the cytoplasm. The enzyme catalyses (2R)-3-phosphoglycerate + ATP = (2R)-3-phospho-glyceroyl phosphate + ADP. It functions in the pathway carbohydrate degradation; glycolysis; pyruvate from D-glyceraldehyde 3-phosphate: step 2/5. This is Phosphoglycerate kinase from Spiroplasma citri.